The primary structure comprises 532 residues: Optineurin (532 aa).

2 coiled-coil regions span residues 27–143 (SMKN…LKLG) and 195–466 (EEVA…EEMM). Residues 502 to 532 (QPSITVYTCPKCNLTVPDMDTLQIHVMDCIT) form a CCHC NOA-type zinc finger. Zn(2+) is bound by residues cysteine 510, cysteine 513, histidine 526, and cysteine 530.

It is found in the cytoplasm. It localises to the perinuclear region. The protein resides in the golgi apparatus. Its subcellular location is the trans-Golgi network. The protein localises to the cytoplasmic vesicle. It is found in the recycling endosome. It localises to the autophagosome. Probably part of the TNF-alpha signaling pathway that can shift the equilibrium toward induction of cell death. May act by regulating membrane trafficking and cellular morphogenesis. This is Optineurin (optn) from Xenopus laevis (African clawed frog).